The primary structure comprises 236 residues: Ubiquinone biosynthesis O-methyltransferase (236 aa).

Residues Arg-39, Gly-59, Asp-80, and Met-124 each contribute to the S-adenosyl-L-methionine site.

It belongs to the methyltransferase superfamily. UbiG/COQ3 family.

It catalyses the reaction a 3-demethylubiquinol + S-adenosyl-L-methionine = a ubiquinol + S-adenosyl-L-homocysteine + H(+). The enzyme catalyses a 3-(all-trans-polyprenyl)benzene-1,2-diol + S-adenosyl-L-methionine = a 2-methoxy-6-(all-trans-polyprenyl)phenol + S-adenosyl-L-homocysteine + H(+). The protein operates within cofactor biosynthesis; ubiquinone biosynthesis. Its function is as follows. O-methyltransferase that catalyzes the 2 O-methylation steps in the ubiquinone biosynthetic pathway. The polypeptide is Ubiquinone biosynthesis O-methyltransferase (Shewanella sp. (strain MR-7)).